The chain runs to 776 residues: E3 ubiquitin-protein ligase UHRF1 (776 aa).

In terms of domain architecture, Ubiquitin-like spans 1-78; it reads MWIQVRTMDG…VQLLVRQAVA (78 aa). Positions 88 to 126 are disordered; that stretch reads AELSDSDSGCGSAQSESDKGSTHGESDVQSAGASGQTDT. Residues 93-102 show a composition bias toward polar residues; it reads SDSGCGSAQS. A compositionally biased stretch (basic and acidic residues) spans 103–113; the sequence is ESDKGSTHGES. The segment covering 114–126 has biased composition (polar residues); it reads DVQSAGASGQTDT. Tudor-like regions lie at residues 135 to 201 and 208 to 277; these read GFYK…PRAR and QLEP…IEEP. The interval 278–298 is disordered; sequence GSAEGPGASSDSPLKKGSNGP. Residues 290-299 form a linker region; it reads PLKKGSNGPE. The PHD-type zinc-finger motif lies at 297-364; the sequence is GPECKVCKDD…DWYCPDCRND (68 aa). 2 histone H3R2me0 binding regions span residues 331–335 and 351–353; these read CDECD and PDD. The YDG domain occupies 417-580; that stretch reads GPVPGVPVGT…FLVWRYLLKR (164 aa). The tract at residues 443–444 is required to promote base flipping; that stretch reads HV. DNA-binding positions include 461-462 and Asp467; that span reads AG. Required for formation of a 5-methylcytosine-binding pocket regions lie at residues 464-467 and 476-479; these read YEDD and YTGS. A disordered region spans residues 617–660; sequence EKEKENKNEDDIEETPTKGKRKRKSQSMEEKSSPTKGTPKKMKV. Ser649 bears the Phosphoserine; by CDK2 mark. Residues 706–745 form an RING-type zinc finger; that stretch reads CICCQEVVYQPITTECQHNVCRECLQRSFKAKVYTCPACR.

Post-translationally, phosphorylation at Ser-649 is required for gastrulation. Expressed in proliferating tissues. Highly expressed 24-48 hours after fertilization (hpf) in rapidly proliferating tissues, including the tectum, retina and brachial arches. Preferentially expressed in the liver bud and expression is maintained in the fully developed liver. Also expressed in the proximal gut. In adult, the highest expression is detected in testis.

The protein resides in the nucleus. It localises to the cytoplasm. The enzyme catalyses S-ubiquitinyl-[E2 ubiquitin-conjugating enzyme]-L-cysteine + [acceptor protein]-L-lysine = [E2 ubiquitin-conjugating enzyme]-L-cysteine + N(6)-ubiquitinyl-[acceptor protein]-L-lysine.. The protein operates within protein modification; protein ubiquitination. Functionally, multidomain protein that acts as a key epigenetic regulator by bridging DNA methylation and chromatin modification. Specifically recognizes and binds hemimethylated DNA at replication forks via its YDG domain and recruits dnmt1 methyltransferase to ensure faithful propagation of the DNA methylation patterns through DNA replication. In addition to its role in maintenance of DNA methylation, also plays a key role in chromatin modification: through its tudor-like regions and PHD-type zinc fingers, specifically recognizes and binds histone H3 trimethylated at 'Lys-9' (H3K9me3) and unmethylated at 'Arg-2' (H3R2me0), respectively, and recruits chromatin proteins. Enriched in pericentric heterochromatin where it recruits different chromatin modifiers required for this chromatin replication. Also localizes to euchromatic regions where it negatively regulates transcription possibly by impacting DNA methylation and histone modifications. Has E3 ubiquitin-protein ligase activity by mediating the ubiquitination of target proteins. However, it is still unclear how E3 ubiquitin-protein ligase activity is related to its role in chromatin in vivo. Required for pregastrula and lens development. The polypeptide is E3 ubiquitin-protein ligase UHRF1 (uhrf1) (Danio rerio (Zebrafish)).